The primary structure comprises 848 residues: ATP-dependent Clp protease ATP-binding subunit ClpC1 (848 aa).

Positions 2-144 (FERFTDRARR…RQQVIQLLSG (143 aa)) constitute a Clp R domain. 2 repeat regions span residues 5-70 (FTDR…IGQG) and 80-144 (FTPR…LLSG). The UVR domain maps to 425–460 (DEKIADARREKESAIDAQDFEKAAALRDKEKQLVAQ). Residues 553–560 (GPSGVGKT) and 617–626 (KPFSVVLFDE) contribute to the ATP site. The interval 811-848 (GQGEDAKFTFSGGPKRAETAEPDLAGAGAAGAPTAGTE) is disordered. Residues 835–848 (AGAGAAGAPTAGTE) are compositionally biased toward low complexity.

The protein belongs to the ClpA/ClpB family. ClpC subfamily.

Functionally, ATP-dependent specificity component of the Clp protease. It directs the protease to specific substrates. Can perform chaperone functions in the absence of ClpP. Degrades anti-sigma-E factor RseA in the presence of ClpP2. This Mycolicibacterium smegmatis (strain ATCC 700084 / mc(2)155) (Mycobacterium smegmatis) protein is ATP-dependent Clp protease ATP-binding subunit ClpC1 (clpC1).